The primary structure comprises 320 residues: MEVQIGIDLMGGDHSPLVVWQVLVDVLKSQSSTIPFAFTLFASEEIRKQIQEEFISDLPQEKFPKIISAENFVAMEDSPLAAIRKKSSSMALGLDYLQEDKLDAFISTGNTGALVTLARAKIPLFPAVSRPALLVCVPTMRGHAVILDVGANISVKPEEMVGFARMGLAYRQCLGDSKIPTIGLLNIGSEERKGTEAHRQTFRMLRETFGEAFLGNIESGAVFDGAADIVVTDGFTGNIFLKTAEGVFEFLQRILGDKLEADIQRRLDYTFYPGSVVCGLSKLVIKCHGKACGSSLFHGILGSINLAQARLCKRILSNLI.

It belongs to the PlsX family. As to quaternary structure, homodimer. Probably interacts with PlsY.

Its subcellular location is the cytoplasm. It catalyses the reaction a fatty acyl-[ACP] + phosphate = an acyl phosphate + holo-[ACP]. The protein operates within lipid metabolism; phospholipid metabolism. Its function is as follows. Catalyzes the reversible formation of acyl-phosphate (acyl-PO(4)) from acyl-[acyl-carrier-protein] (acyl-ACP). This enzyme utilizes acyl-ACP as fatty acyl donor, but not acyl-CoA. This chain is Phosphate acyltransferase, found in Chlamydia pneumoniae (Chlamydophila pneumoniae).